Reading from the N-terminus, the 141-residue chain is Hemoglobin subunit alpha (141 aa).

Positions 1–141 (VLSPADKTNV…VSTVLTSKYR (141 aa)) constitute a Globin domain. S3 carries the post-translational modification Phosphoserine. An N6-succinyllysine modification is found at K7. Residue T8 is modified to Phosphothreonine. At K11 the chain carries N6-succinyllysine. K16 is modified (N6-acetyllysine; alternate). K16 carries the post-translational modification N6-succinyllysine; alternate. Y24 carries the phosphotyrosine modification. S35 carries the post-translational modification Phosphoserine. K40 carries the N6-succinyllysine modification. The residue at position 49 (S49) is a Phosphoserine. An O2-binding site is contributed by H58. H87 provides a ligand contact to heme b. S102 is modified (phosphoserine). At T108 the chain carries Phosphothreonine. Position 124 is a phosphoserine (S124). Residues T134 and T137 each carry the phosphothreonine modification. At S138 the chain carries Phosphoserine.

This sequence belongs to the globin family. In terms of assembly, heterotetramer of two alpha chains and two beta chains. As to expression, red blood cells.

In terms of biological role, involved in oxygen transport from the lung to the various peripheral tissues. Functionally, hemopressin acts as an antagonist peptide of the cannabinoid receptor CNR1. Hemopressin-binding efficiently blocks cannabinoid receptor CNR1 and subsequent signaling. The sequence is that of Hemoglobin subunit alpha (HBA) from Lutra lutra (European river otter).